Consider the following 113-residue polypeptide: Endoribonuclease SymE (113 aa).

The SpoVT-AbrB domain occupies 29–74 (SRYPDYSRIPAITLKGQWLEAAGFATGTAVVVKVMEGCIVLTAQPA).

The protein belongs to the SymE family.

It localises to the cytoplasm. Functionally, involved in the degradation and recycling of damaged RNA. It is itself a target for degradation by the ATP-dependent protease Lon. The polypeptide is Endoribonuclease SymE (Escherichia coli (strain ATCC 8739 / DSM 1576 / NBRC 3972 / NCIMB 8545 / WDCM 00012 / Crooks)).